Consider the following 392-residue polypeptide: Phosphoglycerate kinase (392 aa).

Substrate is bound by residues Asp21–Asn23, Arg36, His59–Arg62, Arg118, and Arg151. ATP is bound by residues Lys201, Gly292, Glu323, and Gly349–Ser352.

Belongs to the phosphoglycerate kinase family. Monomer.

The protein localises to the cytoplasm. The enzyme catalyses (2R)-3-phosphoglycerate + ATP = (2R)-3-phospho-glyceroyl phosphate + ADP. It functions in the pathway carbohydrate degradation; glycolysis; pyruvate from D-glyceraldehyde 3-phosphate: step 2/5. The protein is Phosphoglycerate kinase of Borrelia turicatae (strain 91E135).